Reading from the N-terminus, the 69-residue chain is MKAKELRELTDAELVEKLASLKDELFKLRFQLSTGQLDNPSRIREVRRDIARVNTIIREREIARQKVEK.

It belongs to the universal ribosomal protein uL29 family.

This Carboxydothermus hydrogenoformans (strain ATCC BAA-161 / DSM 6008 / Z-2901) protein is Large ribosomal subunit protein uL29.